The sequence spans 395 residues: Putative pyridoxal phosphate-dependent acyltransferase (395 aa).

110–111 provides a ligand contact to pyridoxal 5'-phosphate; that stretch reads GF. A substrate-binding site is contributed by histidine 135. Residues serine 185, 210–213, and 240–243 contribute to the pyridoxal 5'-phosphate site; these read DDAH and TLSK. At lysine 243 the chain carries N6-(pyridoxal phosphate)lysine. Residue threonine 357 participates in substrate binding.

It belongs to the class-II pyridoxal-phosphate-dependent aminotransferase family. In terms of assembly, homodimer. Pyridoxal 5'-phosphate serves as cofactor.

In Staphylococcus aureus (strain MRSA252), this protein is Putative pyridoxal phosphate-dependent acyltransferase.